The sequence spans 409 residues: uncharacterized protein (409 aa).

The 209-residue stretch at 1-209 (MRVFVARQPI…GHDLSTHFYS (209 aa)) folds into the EAL domain. In terms of domain architecture, HDOD spans 203–392 (LSTHFYSYYE…GNQLDKEEAY (190 aa)).

This is an uncharacterized protein from Bacillus subtilis (strain 168).